A 4349-amino-acid polypeptide reads, in one-letter code: Dynein heavy chain, cytoplasmic (4349 aa).

The tract at residues 1-1907 is stem; that stretch reads MEVTSAAAPS…YIKMANAKLN (1907 aa). Coiled-coil stretches lie at residues 459–480, 1178–1215, 1266–1293, 1334–1354, 1560–1577, and 1640–1670; these read WEEN…RNEK, LMKF…STAQ, SQWE…QAKI, ESRI…KEAL, YKEF…LNRV, and NIPN…EKER. 4 AAA regions span residues 1908–2133, 2201–2459, 2565–2814, and 2908–3177; these read YGFE…VLVS, NAIR…FTTA, EVNT…WVRG, and TFCE…QGKV. 1946–1953 contacts ATP; that stretch reads GPAGTGKT. Residues 2194–2217 adopt a coiled-coil conformation; the sequence is ANLEALENAIRELAAERHLVVNEL. ATP-binding positions include 2239-2246, 2604-2611, and 2946-2953; these read GNSGSGKS, GPPGSGKT, and GVSGSGKT. 3 coiled-coil regions span residues 3186–3294, 3420–3477, and 3774–3807; these read LDFV…LAKA, GPLK…EMSR, and DNVI…VEEI. The segment at 3186 to 3477 is stalk; sequence LDFVTQYIKL…TQAIKAEMSR (292 aa). AAA stretches follow at residues 3563–3792 and 4001–4213; these read LSTA…EISA and AERF…IVDT.

It belongs to the dynein heavy chain family. Consists of at least two heavy chains and a number of intermediate and light chains.

It localises to the cytoplasm. It is found in the cytoskeleton. Functionally, cytoplasmic dynein acts as a motor for the intracellular retrograde motility of vesicles and organelles along microtubules. Dynein has ATPase activity; the force-producing power stroke is thought to occur on release of ADP. This is Dynein heavy chain, cytoplasmic (DHC1) from Fusarium vanettenii (Neocosmospora pisi).